A 35-amino-acid chain; its full sequence is Phospholipase A2 neuwieditoxin-1 (35 aa).

Ca(2+) is bound by residues Tyr27, Gly29, and Gly31.

The protein belongs to the phospholipase A2 family. Group II subfamily. D49 sub-subfamily. In terms of assembly, dimer. Requires Ca(2+) as cofactor. In terms of tissue distribution, expressed by the venom gland.

It localises to the secreted. The catalysed reaction is a 1,2-diacyl-sn-glycero-3-phosphocholine + H2O = a 1-acyl-sn-glycero-3-phosphocholine + a fatty acid + H(+). Its function is as follows. Snake venom phospholipase A2 (PLA2) that shows presynaptic neurotoxicity. 10 ug/ml of this protein produce complete neuromuscular blockade up to 80 minutes, without inhibiting the responses to acetylcholine (ACh) and potassium chloride (KCl). In addition, it produces a calcium-dependent blockade of acetylcholine release and causes appearance of giant miniature end-plate potentials. PLA2 catalyzes the calcium-dependent hydrolysis of the 2-acyl groups in 3-sn-phosphoglycerides. The sequence is that of Phospholipase A2 neuwieditoxin-1 from Bothrops pauloensis (Neuwied's lancehead).